The chain runs to 243 residues: MTQFSPLYEGKAKIIYATADPDVLLAEFKDDATAFNAQKRGSIQNKGVMNCAIASHLFQYLAAQGITNHFIAQVAPNKMHIRRVEIIPLEVVVRNQAAGSLCRQTGLPLGLALNPPLVEFYLKNDDLGDPLLTPDRLRLLQVATDEEVIQIRQMALAVNTHLSHFFAECGITLVDFKLEFGRRPTGEILLADEISPDSCRLWNRDESDPEKRILDKDRFRQDLGAIEEAYALVMQRVLAHSVS.

The protein belongs to the SAICAR synthetase family.

The catalysed reaction is 5-amino-1-(5-phospho-D-ribosyl)imidazole-4-carboxylate + L-aspartate + ATP = (2S)-2-[5-amino-1-(5-phospho-beta-D-ribosyl)imidazole-4-carboxamido]succinate + ADP + phosphate + 2 H(+). Its pathway is purine metabolism; IMP biosynthesis via de novo pathway; 5-amino-1-(5-phospho-D-ribosyl)imidazole-4-carboxamide from 5-amino-1-(5-phospho-D-ribosyl)imidazole-4-carboxylate: step 1/2. In Thermosynechococcus vestitus (strain NIES-2133 / IAM M-273 / BP-1), this protein is Phosphoribosylaminoimidazole-succinocarboxamide synthase.